A 304-amino-acid polypeptide reads, in one-letter code: Acetyl-coenzyme A carboxylase carboxyl transferase subunit beta (304 aa).

The CoA carboxyltransferase N-terminal domain occupies V23 to V292. Zn(2+) contacts are provided by C27, C30, C46, and C49. The C4-type zinc finger occupies C27 to C49. Positions P283–A304 are disordered.

This sequence belongs to the AccD/PCCB family. As to quaternary structure, acetyl-CoA carboxylase is a heterohexamer composed of biotin carboxyl carrier protein (AccB), biotin carboxylase (AccC) and two subunits each of ACCase subunit alpha (AccA) and ACCase subunit beta (AccD). Zn(2+) serves as cofactor.

The protein localises to the cytoplasm. It carries out the reaction N(6)-carboxybiotinyl-L-lysyl-[protein] + acetyl-CoA = N(6)-biotinyl-L-lysyl-[protein] + malonyl-CoA. It participates in lipid metabolism; malonyl-CoA biosynthesis; malonyl-CoA from acetyl-CoA: step 1/1. Its function is as follows. Component of the acetyl coenzyme A carboxylase (ACC) complex. Biotin carboxylase (BC) catalyzes the carboxylation of biotin on its carrier protein (BCCP) and then the CO(2) group is transferred by the transcarboxylase to acetyl-CoA to form malonyl-CoA. The polypeptide is Acetyl-coenzyme A carboxylase carboxyl transferase subunit beta (Salmonella agona (strain SL483)).